Here is a 60-residue protein sequence, read N- to C-terminus: DIEDFYTSETCPYKNDSQLAWDTCSGGTGNCGTVCCGQCFSFPVSQSCAGMADSNDCPNA.

4 disulfides stabilise this stretch: Cys-11/Cys-39, Cys-24/Cys-35, Cys-31/Cys-57, and Cys-36/Cys-48.

Its subcellular location is the secreted. Its function is as follows. Mating ciliate pheromones (or gamones) are diffusible extracellular communication signals that distinguish different intraspecific classes of cells commonly referred to as 'mating types'. They prepare the latter for conjugation by changing their cell surface properties. The protein is Mating pheromone En-2 of Euplotes nobilii (Ciliate).